Reading from the N-terminus, the 653-residue chain is DNA-directed RNA polymerase III subunit RPC-3 (653 aa).

3 disordered regions span residues 141 to 186 (INGV…DSDP), 280 to 309 (DSSA…DFSD), and 422 to 442 (IKED…KRRG). The span at 159–170 (AENHTDHAHDYQ) shows a compositional bias: basic and acidic residues. Acidic residues-rich tracts occupy residues 293-309 (PLED…DFSD) and 424-433 (EDEDDEDEEG). The tract at residues 580-601 (TYKSMSRCLQRIRVEREKLKFL) is leucine-zipper.

Belongs to the RNA polymerase beta chain family. In terms of assembly, component of the RNA polymerase III (Pol III) complex consisting of 17 subunits.

It localises to the nucleus. In terms of biological role, DNA-dependent RNA polymerase catalyzes the transcription of DNA into RNA using the four ribonucleoside triphosphates as substrates. Specific core component of RNA polymerase III which synthesizes small RNAs, such as 5S rRNA and tRNAs. This Coccidioides immitis (strain RS) (Valley fever fungus) protein is DNA-directed RNA polymerase III subunit RPC-3 (RPC-82).